A 332-amino-acid chain; its full sequence is Glycerol-3-phosphate dehydrogenase [NAD(P)+] (332 aa).

3 residues coordinate NADPH: tryptophan 11, arginine 30, and lysine 108. Residues lysine 108, glycine 137, and serine 139 each contribute to the sn-glycerol 3-phosphate site. Alanine 141 contacts NADPH. Residues lysine 192, aspartate 245, serine 255, arginine 256, and asparagine 257 each contribute to the sn-glycerol 3-phosphate site. Catalysis depends on lysine 192, which acts as the Proton acceptor. Residue arginine 256 participates in NADPH binding. NADPH-binding residues include valine 280 and glutamate 282.

The protein belongs to the NAD-dependent glycerol-3-phosphate dehydrogenase family.

It localises to the cytoplasm. The enzyme catalyses sn-glycerol 3-phosphate + NAD(+) = dihydroxyacetone phosphate + NADH + H(+). It catalyses the reaction sn-glycerol 3-phosphate + NADP(+) = dihydroxyacetone phosphate + NADPH + H(+). It participates in membrane lipid metabolism; glycerophospholipid metabolism. Its function is as follows. Catalyzes the reduction of the glycolytic intermediate dihydroxyacetone phosphate (DHAP) to sn-glycerol 3-phosphate (G3P), the key precursor for phospholipid synthesis. The protein is Glycerol-3-phosphate dehydrogenase [NAD(P)+] of Burkholderia cenocepacia (strain ATCC BAA-245 / DSM 16553 / LMG 16656 / NCTC 13227 / J2315 / CF5610) (Burkholderia cepacia (strain J2315)).